Consider the following 447-residue polypeptide: MIKIYDTLTRSLREFVPIHENTVNMYVCGPTVYNYIHVGNGRSAIAFDTIRRYFEYRGYTVNYISNFTDVDDKIIKAAAKAGMTTKALSDKFIAAFKEDVAALGVKPATENPRVIDYMQDIIDFVQILVDKGFAYESSGDVYFRVRKSDNYAALANKTLEELEIGASGRVDAESDCKEDPLDFALWKAAKEGEIAWDSPWGAGRPGWHIECSVMATTILGDTIDIHGGGADLEFPHHTNEIAQSEAKTGKKFANYWMHNGFVNIDNEKMSKSLGNFITVHDALKTMDGQVLRFFFATQHYRKPFNFTEKAIRDAEINLKYLKNTYEQPFTATVDEAVFARFLEKFQAAMDEDFNTANGITVVFELAKWINSGHYDQTVKDKFAEILQIFGVVFKEEVLDAEIEKLIEERQKARAARDFTKADAIRDDLAAQGIKLLDTKDGVRWMRD.

Cys-28 contacts Zn(2+). The 'HIGH' region signature appears at 30–40 (PTVYNYIHVGN). The Zn(2+) site is built by Cys-211, His-236, and Glu-240. Residues 268 to 272 (KMSKS) carry the 'KMSKS' region motif. Lys-271 lines the ATP pocket.

This sequence belongs to the class-I aminoacyl-tRNA synthetase family. Monomer. Requires Zn(2+) as cofactor.

It localises to the cytoplasm. It catalyses the reaction tRNA(Cys) + L-cysteine + ATP = L-cysteinyl-tRNA(Cys) + AMP + diphosphate. This is Cysteine--tRNA ligase from Streptococcus mutans serotype c (strain ATCC 700610 / UA159).